An 882-amino-acid polypeptide reads, in one-letter code: Alanine--tRNA ligase (882 aa).

Zn(2+) contacts are provided by His568, His572, Cys670, and His674.

Belongs to the class-II aminoacyl-tRNA synthetase family. Zn(2+) serves as cofactor.

Its subcellular location is the cytoplasm. It catalyses the reaction tRNA(Ala) + L-alanine + ATP = L-alanyl-tRNA(Ala) + AMP + diphosphate. In terms of biological role, catalyzes the attachment of alanine to tRNA(Ala) in a two-step reaction: alanine is first activated by ATP to form Ala-AMP and then transferred to the acceptor end of tRNA(Ala). Also edits incorrectly charged Ser-tRNA(Ala) and Gly-tRNA(Ala) via its editing domain. The sequence is that of Alanine--tRNA ligase from Lactobacillus johnsonii (strain CNCM I-12250 / La1 / NCC 533).